A 461-amino-acid chain; its full sequence is Putative cytochrome P450 132 (461 aa).

C409 contacts heme.

It belongs to the cytochrome P450 family. It depends on heme as a cofactor.

This Mycobacterium tuberculosis (strain ATCC 25618 / H37Rv) protein is Putative cytochrome P450 132 (cyp132).